Consider the following 477-residue polypeptide: Glutamate--tRNA ligase (477 aa).

The short motif at Pro8–Thr18 is the 'HIGH' region element. Residues Lys247–Arg251 carry the 'KMSKS' region motif. Lys250 is a binding site for ATP.

The protein belongs to the class-I aminoacyl-tRNA synthetase family. Glutamate--tRNA ligase type 1 subfamily. In terms of assembly, monomer.

It localises to the cytoplasm. It carries out the reaction tRNA(Glu) + L-glutamate + ATP = L-glutamyl-tRNA(Glu) + AMP + diphosphate. Functionally, catalyzes the attachment of glutamate to tRNA(Glu) in a two-step reaction: glutamate is first activated by ATP to form Glu-AMP and then transferred to the acceptor end of tRNA(Glu). The chain is Glutamate--tRNA ligase from Parasynechococcus marenigrum (strain WH8102).